A 398-amino-acid chain; its full sequence is Signal-regulatory protein beta-1 isoform 3 (398 aa).

A signal peptide spans 1–29; the sequence is MPVPASWPHLPSPFLLMTLLLGRLTGVAG. The Extracellular segment spans residues 30–371; the sequence is EEELQVIQPD…GPALASAAPL (342 aa). In terms of domain architecture, Ig-like V-type spans 31–136; it reads EELQVIQPDK…SPDHVEFKSG (106 aa). 2 disulfide bridges follow: cysteine 54–cysteine 120 and cysteine 169–cysteine 227. Ig-like C1-type domains lie at 147 to 246 and 253 to 347; these read PSAP…ANLS and PTLE…HDLK. Asparagine 244, asparagine 291, and asparagine 318 each carry an N-linked (GlcNAc...) asparagine glycan. Cysteines 272 and 330 form a disulfide. A compositionally biased stretch (basic and acidic residues) spans 337 to 354; that stretch reads QPAVSKSHDLKVSAHPKE. The interval 337 to 361 is disordered; that stretch reads QPAVSKSHDLKVSAHPKEQGSNTAP. The chain crosses the membrane as a helical span at residues 372-392; it reads LIAFLLGPKVLLVVGVSVIYV. Topologically, residues 393–398 are cytoplasmic; sequence YWKQKA.

The protein localises to the membrane. Its function is as follows. Immunoglobulin-like cell surface receptor involved in the negative regulation of receptor tyrosine kinase-coupled signaling processes. This is Signal-regulatory protein beta-1 isoform 3 (SIRPB1) from Homo sapiens (Human).